Here is a 1297-residue protein sequence, read N- to C-terminus: Phosphoribosylformylglycinamidine synthase (1297 aa).

The segment at 303-329 (ISPFPGAATGSGGEIRDEGATGRGAKP) is disordered. ATP is bound at residue 308 to 319 (GAATGSGGEIRD). Mg(2+) is bound by residues D680, E719, N723, and D887. S889 is a binding site for ATP. The Glutamine amidotransferase type-1 domain occupies 1045–1297 (IAILREQGVN…RLFRNARMVF (253 aa)). The Nucleophile role is filled by C1138. Catalysis depends on residues H1263 and E1265.

The protein in the N-terminal section; belongs to the FGAMS family. In terms of assembly, monomer.

Its subcellular location is the cytoplasm. The catalysed reaction is N(2)-formyl-N(1)-(5-phospho-beta-D-ribosyl)glycinamide + L-glutamine + ATP + H2O = 2-formamido-N(1)-(5-O-phospho-beta-D-ribosyl)acetamidine + L-glutamate + ADP + phosphate + H(+). It participates in purine metabolism; IMP biosynthesis via de novo pathway; 5-amino-1-(5-phospho-D-ribosyl)imidazole from N(2)-formyl-N(1)-(5-phospho-D-ribosyl)glycinamide: step 1/2. Its function is as follows. Phosphoribosylformylglycinamidine synthase involved in the purines biosynthetic pathway. Catalyzes the ATP-dependent conversion of formylglycinamide ribonucleotide (FGAR) and glutamine to yield formylglycinamidine ribonucleotide (FGAM) and glutamate. In Haemophilus influenzae (strain 86-028NP), this protein is Phosphoribosylformylglycinamidine synthase.